Here is a 130-residue protein sequence, read N- to C-terminus: MNYSEKLTGAPPMTEVPLELLEEMLWFFRVEDATPWNCSMFVLAALVAIISFILLGRNIQANRNQKKLPPEKQTPEVLYLAEGGNKDDKNLTSLTETLLSEKPTLAQGEMEAKCSDVPRVHLPDPQEPES.

At 1-35 (MNYSEKLTGAPPMTEVPLELLEEMLWFFRVEDATP) the chain is on the extracellular side. A helical transmembrane segment spans residues 36 to 56 (WNCSMFVLAALVAIISFILLG). Topologically, residues 57 to 130 (RNIQANRNQK…HLPDPQEPES (74 aa)) are cytoplasmic. Residues 99 to 130 (LSEKPTLAQGEMEAKCSDVPRVHLPDPQEPES) form a disordered region. The segment covering 110–124 (MEAKCSDVPRVHLPD) has biased composition (basic and acidic residues).

Belongs to the OST-beta family. As to quaternary structure, interacts with SLC51A. The Ost-alpha/Ost-beta complex is a heterodimer composed of alpha (SLC51A) and beta (SLC51B) subunit; induces the transport of SLC51A from the endoplasmic reticulum to the plasma membrane.

It localises to the cell membrane. It carries out the reaction taurocholate(out) = taurocholate(in). It catalyses the reaction estrone 3-sulfate(out) = estrone 3-sulfate(in). The catalysed reaction is dehydroepiandrosterone 3-sulfate(out) = dehydroepiandrosterone 3-sulfate(in). The enzyme catalyses tauroursodeoxycholate(out) = tauroursodeoxycholate(in). It carries out the reaction glycoursodeoxycholate(out) = glycoursodeoxycholate(in). It catalyses the reaction glycocholate(out) = glycocholate(in). The catalysed reaction is taurochenodeoxycholate(out) = taurochenodeoxycholate(in). The enzyme catalyses glycochenodeoxycholate(out) = glycochenodeoxycholate(in). It carries out the reaction taurodeoxycholate(out) = taurodeoxycholate(in). It catalyses the reaction glycodeoxycholate(out) = glycodeoxycholate(in). The catalysed reaction is prostaglandin E2(out) = prostaglandin E2(in). Essential component of the Ost-alpha/Ost-beta complex, a heterodimer that acts as the intestinal basolateral transporter responsible for bile acid export from enterocytes into portal blood. The Ost-alpha/Ost-beta complex efficiently transports the major species of bile acids (taurocholate). Taurine conjugates are transported more efficiently across the basolateral membrane than glycine-conjugated bile acids. Can also transport steroids such as estrone 3-sulfate and dehydroepiandrosterone 3-sulfate, therefore playing a role in the enterohepatic circulation of sterols. Able to transport eicosanoids such as prostaglandin E2. Modulates SLC51A glycosylation, membrane trafficking and stability activities. The protein is Organic solute transporter subunit beta (SLC51B) of Bos taurus (Bovine).